A 172-amino-acid polypeptide reads, in one-letter code: 3-hydroxydecanoyl-[acyl-carrier-protein] dehydratase (172 aa).

H71 is an active-site residue.

The protein belongs to the thioester dehydratase family. FabA subfamily. As to quaternary structure, homodimer.

It is found in the cytoplasm. The enzyme catalyses a (3R)-hydroxyacyl-[ACP] = a (2E)-enoyl-[ACP] + H2O. It carries out the reaction (3R)-hydroxydecanoyl-[ACP] = (2E)-decenoyl-[ACP] + H2O. It catalyses the reaction (2E)-decenoyl-[ACP] = (3Z)-decenoyl-[ACP]. Its pathway is lipid metabolism; fatty acid biosynthesis. Necessary for the introduction of cis unsaturation into fatty acids. Catalyzes the dehydration of (3R)-3-hydroxydecanoyl-ACP to E-(2)-decenoyl-ACP and then its isomerization to Z-(3)-decenoyl-ACP. Can catalyze the dehydratase reaction for beta-hydroxyacyl-ACPs with saturated chain lengths up to 16:0, being most active on intermediate chain length. The sequence is that of 3-hydroxydecanoyl-[acyl-carrier-protein] dehydratase from Aliivibrio fischeri (strain ATCC 700601 / ES114) (Vibrio fischeri).